The sequence spans 195 residues: MATSSISAALLSPLTLRNASSSSTKQDFSTLSSLNLRRTLTPTLQSGHTLSNSSNFATFAAPGALEVLETSPDSFEDGSETSKISIAADSDQMAPKQKIRIKLRSYWVPLIEDSCKQIMDAARTTNAKIMGPVPLPTKKRIYCVLKSPHVHKDARFHFEIRTHQRLIDILYPTAQTIDSLMQLDLPAGVDVEVKL.

The N-terminal 59 residues, Met1–Phe59, are a transit peptide targeting the chloroplast.

The protein belongs to the universal ribosomal protein uS10 family. In terms of assembly, component of the chloroplast small ribosomal subunit (SSU). Mature 70S chloroplast ribosomes of higher plants consist of a small (30S) and a large (50S) subunit. The 30S small subunit contains 1 molecule of ribosomal RNA (16S rRNA) and 24 different proteins. The 50S large subunit contains 3 rRNA molecules (23S, 5S and 4.5S rRNA) and 33 different proteins.

The protein resides in the plastid. Its subcellular location is the chloroplast. In terms of biological role, component of the chloroplast ribosome (chloro-ribosome), a dedicated translation machinery responsible for the synthesis of chloroplast genome-encoded proteins, including proteins of the transcription and translation machinery and components of the photosynthetic apparatus. This is Small ribosomal subunit protein uS10c (RPS10) from Spinacia oleracea (Spinach).